A 547-amino-acid chain; its full sequence is MEAYFPQTTRDALAGLLPSQMSGRFPEMPAYLTQDVLLRAAGAVGAIYAIYISGLVIYRLFLSPLAKFPGPKIAAMTSYYELYYDVIHKGKYIFQIEKMHDKYGPIVRINPFELSIRDSEYYDELYVMGNIRKTDRYEAFVEGVVDFEGSHLATISHDLHRKRRKPLDPYFSRQGITRLEPMVAELTEKLVVNRLESYKGTGKVVRLDHAFTAFSGDVINRICVNRPSEVYVEDEDFAPWWFDMFHLGAVSLPLFMGMPWLIRLIRFMPASLASYLNTSMGSFSKFKLMCDEQLNEAKREKALKSKSQNSNQPTPGRLTLFRHLVDSDLPPAELSDTRLSREAQVLIGSGTMTTAGTMGFLCYYIMINPKIRARLSEELGSVMAEYPAKKPSLAELERLPYLQAVIKEGLRLSYGTMHRRARVSPSQPLLFKEWVIPPGTPVGMSAYFQHRDEKTFPRPMEFLPERWLGEITPAMYRNYIPFSKGSRHCLGMNLAYCELNFILAAMFRPGAAPFELYGTDESDVRPVHDLIVPMPRLDSLGVRVVYN.

2 consecutive transmembrane segments (helical) span residues glycine 42 to leucine 62 and phenylalanine 242 to isoleucine 262. Asparagine 277 carries an N-linked (GlcNAc...) asparagine glycan. The helical transmembrane segment at valine 345–isoleucine 365 threads the bilayer. Position 489 (cysteine 489) interacts with heme.

The protein belongs to the cytochrome P450 family. The cofactor is heme.

It localises to the membrane. The enzyme catalyses ophiobolin F + 4 reduced [NADPH--hemoprotein reductase] + 4 O2 = ophiobolin C + 4 oxidized [NADPH--hemoprotein reductase] + 6 H2O + 4 H(+). The protein operates within secondary metabolite biosynthesis; terpenoid biosynthesis. Functionally, cytochrome P450 monooxygenase; part of the gene cluster that mediates the biosynthesis of the sesterterpenes ophiobolins, fungal phytotoxins with potential anti-cancer activities. The first step of the pathway is performed by the sesterterpene synthase oblA that possesses both prenyl transferase and terpene cyclase activity, converting isopentenyl diphosphate and dimethylallyl diphosphate into geranylfarnesyl diphosphate (GFPP) and further converting GFPP into ophiobolin F, respectively. Other sesterterpenoids (C(25) terpenoids) are found as minor products of oblA. The cytochrome P450 monooxygenase oblB then catalyzes a four-step oxidative transformation of ophiobolin F to yield ophiobolin C. The function of the cytochrome P450 monooxygenase oblE has still to be determined. The chain is Cytochrome P450 monooxygenase oblB from Emericella variicolor (Aspergillus stellatus).